The sequence spans 729 residues: DNA topoisomerase 3 (729 aa).

The Toprim domain occupies 3 to 136 (KSVVIAEKPS…IKRLWISSVT (134 aa)). Residues Glu-9 and Asp-105 each coordinate Mg(2+). The region spanning 153-594 (YDNLYASAVA…EMKNYTKEIV (442 aa)) is the Topo IA-type catalytic domain. The tract at residues 187 to 192 (NCGRVQ) is interaction with DNA. The O-(5'-phospho-DNA)-tyrosine intermediate role is filled by Tyr-310. The span at 686–713 (ERRKKESGNKADKRDVQKYMKQQKKEEE) shows a compositional bias: basic and acidic residues. Residues 686–718 (ERRKKESGNKADKRDVQKYMKQQKKEEEPLNNP) form a disordered region.

It belongs to the type IA topoisomerase family. Mg(2+) serves as cofactor.

It carries out the reaction ATP-independent breakage of single-stranded DNA, followed by passage and rejoining.. Its function is as follows. Releases the supercoiling and torsional tension of DNA, which is introduced during the DNA replication and transcription, by transiently cleaving and rejoining one strand of the DNA duplex. Introduces a single-strand break via transesterification at a target site in duplex DNA. The scissile phosphodiester is attacked by the catalytic tyrosine of the enzyme, resulting in the formation of a DNA-(5'-phosphotyrosyl)-enzyme intermediate and the expulsion of a 3'-OH DNA strand. The free DNA strand then undergoes passage around the unbroken strand, thus removing DNA supercoils. Finally, in the religation step, the DNA 3'-OH attacks the covalent intermediate to expel the active-site tyrosine and restore the DNA phosphodiester backbone. The protein is DNA topoisomerase 3 of Bacillus thuringiensis subsp. konkukian (strain 97-27).